The following is a 383-amino-acid chain: Acetylornithine deacetylase (383 aa).

Residue histidine 80 coordinates Zn(2+). The active site involves aspartate 82. Aspartate 112 serves as a coordination point for Zn(2+). Glutamate 144 is an active-site residue. Zn(2+) is bound by residues glutamate 145, glutamate 169, and histidine 355.

The protein belongs to the peptidase M20A family. ArgE subfamily. Homodimer. Zn(2+) is required as a cofactor. Requires Co(2+) as cofactor. It depends on glutathione as a cofactor.

Its subcellular location is the cytoplasm. It carries out the reaction N(2)-acetyl-L-ornithine + H2O = L-ornithine + acetate. It functions in the pathway amino-acid biosynthesis; L-arginine biosynthesis; L-ornithine from N(2)-acetyl-L-ornithine (linear): step 1/1. Functionally, catalyzes the hydrolysis of the amide bond of N(2)-acetylated L-amino acids. Cleaves the acetyl group from N-acetyl-L-ornithine to form L-ornithine, an intermediate in L-arginine biosynthesis pathway, and a branchpoint in the synthesis of polyamines. The protein is Acetylornithine deacetylase of Shigella flexneri serotype 5b (strain 8401).